We begin with the raw amino-acid sequence, 155 residues long: Small ribosomal subunit protein uS17 (155 aa).

Ala2 carries the N-acetylalanine modification.

This sequence belongs to the universal ribosomal protein uS17 family.

This chain is Small ribosomal subunit protein uS17, found in Drosophila pseudoobscura pseudoobscura (Fruit fly).